The chain runs to 249 residues: tRNA pseudouridine synthase A (249 aa).

The active-site Nucleophile is the aspartate 53. Tyrosine 111 contacts substrate.

The protein belongs to the tRNA pseudouridine synthase TruA family. In terms of assembly, homodimer.

It carries out the reaction uridine(38/39/40) in tRNA = pseudouridine(38/39/40) in tRNA. Its function is as follows. Formation of pseudouridine at positions 38, 39 and 40 in the anticodon stem and loop of transfer RNAs. The sequence is that of tRNA pseudouridine synthase A from Streptococcus suis (strain 05ZYH33).